Consider the following 378-residue polypeptide: Non-functional pseudokinase ZRK6 (378 aa).

A Protein kinase domain is found at 34 to 378 (DGKCNPIKNF…SNNRSQMSSI (345 aa)). Residues 40-48 (IKNFSYDQI) and Lys83 each bind ATP.

This sequence belongs to the protein kinase superfamily. Ser/Thr protein kinase family. ZRK subfamily. As to quaternary structure, interacts with RPP13L4/ZAR1.

The chain is Non-functional pseudokinase ZRK6 from Arabidopsis thaliana (Mouse-ear cress).